The primary structure comprises 384 residues: N-acetylneuraminate epimerase (384 aa).

The first 29 residues, 1–29 (MGMQMKNFKKMMTLMALCLSVAITTSGYA), serve as a signal peptide directing secretion. Kelch repeat units follow at residues 51–95 (VIYV…VFLN), 97–149 (ELYV…VKLN), 151–184 (TMVL…KVIY), 185–230 (NYFN…VMEN), 233–282 (LMLI…LAGA), 304–353 (QNYT…SYGD), and 355–384 (VFLI…LLIK). The active-site Proton acceptor is E239.

Belongs to the NanM family. As to quaternary structure, homodimer.

It localises to the periplasm. It carries out the reaction N-acetyl-alpha-neuraminate = N-acetyl-beta-neuraminate. In terms of biological role, converts alpha-N-acetylneuranimic acid (Neu5Ac) to the beta-anomer, accelerating the equilibrium between the alpha- and beta-anomers. Probably facilitates sialidase-negative bacteria to compete successfully for limited amounts of extracellular Neu5Ac, which is likely taken up in the beta-anomer. In addition, the rapid removal of sialic acid from solution might be advantageous to the bacterium to damp down host responses. This is N-acetylneuraminate epimerase from Salmonella enteritidis PT4 (strain P125109).